A 287-amino-acid chain; its full sequence is Undecaprenyl-diphosphatase (287 aa).

7 consecutive transmembrane segments (helical) span residues 6 to 26 (LHLL…FIPV), 45 to 65 (SGKV…MWIF), 89 to 109 (NLLL…KSIK), 111 to 131 (VFYH…IMLW), 204 to 224 (ATEF…VYDL), 238 to 258 (AIAV…RAVL), and 266 to 286 (YRVF…WIYA).

It belongs to the UppP family.

The protein localises to the cell inner membrane. The catalysed reaction is di-trans,octa-cis-undecaprenyl diphosphate + H2O = di-trans,octa-cis-undecaprenyl phosphate + phosphate + H(+). In terms of biological role, catalyzes the dephosphorylation of undecaprenyl diphosphate (UPP). Confers resistance to bacitracin. The sequence is that of Undecaprenyl-diphosphatase from Bordetella bronchiseptica (strain ATCC BAA-588 / NCTC 13252 / RB50) (Alcaligenes bronchisepticus).